Reading from the N-terminus, the 395-residue chain is Argininosuccinate synthase (395 aa).

ATP-binding positions include 9-17 and A37; that span reads AYSGGLDTS. L-citrulline is bound by residues Y87 and S92. G117 is an ATP binding site. The L-aspartate site is built by T119, N123, and D124. L-citrulline is bound at residue N123. L-citrulline contacts are provided by R127, S173, S182, E258, and Y270.

This sequence belongs to the argininosuccinate synthase family. Type 1 subfamily. As to quaternary structure, homotetramer.

The protein resides in the cytoplasm. It carries out the reaction L-citrulline + L-aspartate + ATP = 2-(N(omega)-L-arginino)succinate + AMP + diphosphate + H(+). It participates in amino-acid biosynthesis; L-arginine biosynthesis; L-arginine from L-ornithine and carbamoyl phosphate: step 2/3. The polypeptide is Argininosuccinate synthase (Methanospirillum hungatei JF-1 (strain ATCC 27890 / DSM 864 / NBRC 100397 / JF-1)).